The sequence spans 509 residues: Maturase K (509 aa).

The protein belongs to the intron maturase 2 family. MatK subfamily.

The protein localises to the plastid. It localises to the chloroplast. Its function is as follows. Usually encoded in the trnK tRNA gene intron. Probably assists in splicing its own and other chloroplast group II introns. The polypeptide is Maturase K (Nicotiana paniculata).